The primary structure comprises 81 residues: Trefoil factor 1 (81 aa).

The N-terminal stretch at 1–21 is a signal peptide; sequence MEHKVTCVLAMVLMLALSSLA. Pyrrolidone carboxylic acid is present on glutamine 22. In terms of domain architecture, P-type spans 26 to 69; it reads ETCAVIPRERINCGFPGVTAQQCKEKGCCFDDSVRGFPWCFRPL. Cystine bridges form between cysteine 28-cysteine 54, cysteine 38-cysteine 53, and cysteine 48-cysteine 65.

It is found in the secreted. Functionally, stabilizer of the mucous gel overlying the gastrointestinal mucosa that provides a physical barrier against various noxious agents. The sequence is that of Trefoil factor 1 (Tff1) from Rattus norvegicus (Rat).